The sequence spans 378 residues: MHPDQKKTFKEKNDIRKKLFNSTKEERLDWRKMKDEKKRKNEEKIIKEAEEAKKAKIEKVDHTPPFTISIAVPGQFLNNAQSAELRTYMAGQIARAATLYRVDEIIIYDESCRMTDEAVNAYYNGTWQGNLIPAETNYEGCFYLAKILEYLECPQYLRKDLFPIQKPLKNAGLLNPLDAQHHLKYDEKTLRFREGVVLKKRSKDGRGPICNIGLEKEFEIDSDAVQLPPYTRVTVEIKNLTEQCKLYRGSITSGATVTRETGLYWGYSVRLMTGLQKVLQAKKFDIVAGVSPRGKLASQMDVCILNKPKILLVFGGVAGVDAAVESEELAEWRRAEDAFDVLIRTTSLSNGSRSERVEENVLSVLAQVQCHLETLNAL.

It belongs to the class IV-like SAM-binding methyltransferase superfamily.

It localises to the cytoplasm. The protein resides in the cytoskeleton. The protein localises to the spindle. Its subcellular location is the chromosome. It is found in the centromere. It localises to the kinetochore. The protein resides in the microtubule organizing center. The protein localises to the centrosome. In terms of biological role, required for association of the centrosomes with the poles of the bipolar mitotic spindle during metaphase. This Caenorhabditis elegans protein is Putative methyltransferase spot-1.